The following is an 878-amino-acid chain: Alanine--tRNA ligase (878 aa).

Residues His-566, His-570, Cys-668, and His-672 each contribute to the Zn(2+) site. Residues 846–866 (GGGRPDMAQAGGKQPEKLEEA) are disordered.

This sequence belongs to the class-II aminoacyl-tRNA synthetase family. Zn(2+) serves as cofactor.

The protein resides in the cytoplasm. The catalysed reaction is tRNA(Ala) + L-alanine + ATP = L-alanyl-tRNA(Ala) + AMP + diphosphate. Functionally, catalyzes the attachment of alanine to tRNA(Ala) in a two-step reaction: alanine is first activated by ATP to form Ala-AMP and then transferred to the acceptor end of tRNA(Ala). Also edits incorrectly charged Ser-tRNA(Ala) and Gly-tRNA(Ala) via its editing domain. This chain is Alanine--tRNA ligase, found in Bacillus pumilus (strain SAFR-032).